The following is a 380-amino-acid chain: Cytochrome b (380 aa).

A run of 4 helical transmembrane segments spans residues 33-53 (FGSLLGLCLATQILTGLFLAM), 77-98 (WLIRNIHANGASFFFICIYMHI), 113-133 (WNIGVVLLLLTMMTAFVGYVL), and 178-198 (FFAFHFLFPFVIAAATVLHLL). Positions 83 and 97 each coordinate heme b. The heme b site is built by His182 and His196. His201 contributes to the a ubiquinone binding site. 4 consecutive transmembrane segments (helical) span residues 226–246 (YKDLLGFVAMLLGLTSLALFA), 288–308 (LGGVLALLFSILVLMVVPILH), 320–340 (LTQFLFWALVADMLILTWIGG), and 347–367 (FIIIGQIASVIYFTIFLVLSP).

It belongs to the cytochrome b family. As to quaternary structure, the cytochrome bc1 complex contains 3 respiratory subunits (MT-CYB, CYC1 and UQCRFS1), 2 core proteins (UQCRC1 and UQCRC2) and probably 6 low-molecular weight proteins. The cofactor is heme b.

Its subcellular location is the mitochondrion inner membrane. In terms of biological role, component of the ubiquinol-cytochrome c reductase complex (complex III or cytochrome b-c1 complex) that is part of the mitochondrial respiratory chain. The b-c1 complex mediates electron transfer from ubiquinol to cytochrome c. Contributes to the generation of a proton gradient across the mitochondrial membrane that is then used for ATP synthesis. This chain is Cytochrome b (mt-cyb), found in Oncorhynchus keta (Chum salmon).